The following is a 392-amino-acid chain: Succinate--CoA ligase [ADP-forming] subunit beta (392 aa).

The region spanning 9-247 (KEILRVCGVP…LYEEDPKEIE (239 aa)) is the ATP-grasp domain. ATP is bound by residues K49, 56 to 58 (GRG), E102, Q105, and E110. 2 residues coordinate Mg(2+): N202 and D216. Residues N267 and 324–326 (GIM) contribute to the substrate site.

The protein belongs to the succinate/malate CoA ligase beta subunit family. In terms of assembly, heterotetramer of two alpha and two beta subunits. Requires Mg(2+) as cofactor.

The enzyme catalyses succinate + ATP + CoA = succinyl-CoA + ADP + phosphate. It catalyses the reaction GTP + succinate + CoA = succinyl-CoA + GDP + phosphate. Its pathway is carbohydrate metabolism; tricarboxylic acid cycle; succinate from succinyl-CoA (ligase route): step 1/1. Its function is as follows. Succinyl-CoA synthetase functions in the citric acid cycle (TCA), coupling the hydrolysis of succinyl-CoA to the synthesis of either ATP or GTP and thus represents the only step of substrate-level phosphorylation in the TCA. The beta subunit provides nucleotide specificity of the enzyme and binds the substrate succinate, while the binding sites for coenzyme A and phosphate are found in the alpha subunit. In Neorickettsia sennetsu (strain ATCC VR-367 / Miyayama) (Ehrlichia sennetsu), this protein is Succinate--CoA ligase [ADP-forming] subunit beta.